The chain runs to 169 residues: Ribosome maturation factor RimP (169 aa).

This sequence belongs to the RimP family.

It localises to the cytoplasm. Functionally, required for maturation of 30S ribosomal subunits. In Pseudomonas putida (strain ATCC 700007 / DSM 6899 / JCM 31910 / BCRC 17059 / LMG 24140 / F1), this protein is Ribosome maturation factor RimP.